Reading from the N-terminus, the 540-residue chain is Dynein axonemal assembly factor 3 (540 aa).

Disordered regions lie at residues 328 to 355 (RASR…TPES) and 485 to 522 (SSPA…VLAQ).

It belongs to the DNAAF3 family.

It localises to the cytoplasm. Its subcellular location is the dynein axonemal particle. Functionally, required for the assembly of axonemal inner and outer dynein arms. Involved in preassembly of dyneins into complexes before their transport into cilia. The sequence is that of Dynein axonemal assembly factor 3 (DNAAF3) from Macaca fascicularis (Crab-eating macaque).